Consider the following 443-residue polypeptide: Methylenetetrahydrofolate--tRNA-(uracil-5-)-methyltransferase TrmFO (443 aa).

8 to 13 (GAGLAG) contributes to the FAD binding site.

It belongs to the MnmG family. TrmFO subfamily. The cofactor is FAD.

The protein resides in the cytoplasm. It catalyses the reaction uridine(54) in tRNA + (6R)-5,10-methylene-5,6,7,8-tetrahydrofolate + NADH + H(+) = 5-methyluridine(54) in tRNA + (6S)-5,6,7,8-tetrahydrofolate + NAD(+). It carries out the reaction uridine(54) in tRNA + (6R)-5,10-methylene-5,6,7,8-tetrahydrofolate + NADPH + H(+) = 5-methyluridine(54) in tRNA + (6S)-5,6,7,8-tetrahydrofolate + NADP(+). Functionally, catalyzes the folate-dependent formation of 5-methyl-uridine at position 54 (M-5-U54) in all tRNAs. The polypeptide is Methylenetetrahydrofolate--tRNA-(uracil-5-)-methyltransferase TrmFO (Thermus thermophilus (strain ATCC 27634 / DSM 579 / HB8)).